The chain runs to 458 residues: 3-isopropylmalate dehydratase large subunit (458 aa).

[4Fe-4S] cluster contacts are provided by cysteine 339, cysteine 399, and cysteine 402.

The protein belongs to the aconitase/IPM isomerase family. LeuC type 1 subfamily. In terms of assembly, heterodimer of LeuC and LeuD. [4Fe-4S] cluster serves as cofactor.

It catalyses the reaction (2R,3S)-3-isopropylmalate = (2S)-2-isopropylmalate. It functions in the pathway amino-acid biosynthesis; L-leucine biosynthesis; L-leucine from 3-methyl-2-oxobutanoate: step 2/4. Functionally, catalyzes the isomerization between 2-isopropylmalate and 3-isopropylmalate, via the formation of 2-isopropylmaleate. The sequence is that of 3-isopropylmalate dehydratase large subunit from Lactococcus lactis subsp. cremoris (strain MG1363).